A 392-amino-acid chain; its full sequence is Phosphoglycerate kinase (392 aa).

Substrate is bound by residues Asp21–Asn23, Arg36, His59–Arg62, Arg114, and Arg147. Residues Lys198, Glu320, and Gly346 to Thr349 each bind ATP.

It belongs to the phosphoglycerate kinase family. Monomer.

It localises to the cytoplasm. The catalysed reaction is (2R)-3-phosphoglycerate + ATP = (2R)-3-phospho-glyceroyl phosphate + ADP. It participates in carbohydrate degradation; glycolysis; pyruvate from D-glyceraldehyde 3-phosphate: step 2/5. The sequence is that of Phosphoglycerate kinase (pgk) from Neisseria meningitidis serogroup B (strain ATCC BAA-335 / MC58).